Consider the following 104-residue polypeptide: NADH-quinone oxidoreductase subunit K (104 aa).

3 helical membrane passes run 4–24 (VPAS…LFGA), 31–51 (VIVL…LVAF), and 67–87 (LFTM…LIAL).

The protein belongs to the complex I subunit 4L family. In terms of assembly, NDH-1 is composed of 14 different subunits. Subunits NuoA, H, J, K, L, M, N constitute the membrane sector of the complex.

It localises to the cell membrane. The catalysed reaction is a quinone + NADH + 5 H(+)(in) = a quinol + NAD(+) + 4 H(+)(out). NDH-1 shuttles electrons from NADH, via FMN and iron-sulfur (Fe-S) centers, to quinones in the respiratory chain. The immediate electron acceptor for the enzyme in this species is believed to be a menaquinone. Couples the redox reaction to proton translocation (for every two electrons transferred, four hydrogen ions are translocated across the cytoplasmic membrane), and thus conserves the redox energy in a proton gradient. In Bacillus cereus (strain AH187), this protein is NADH-quinone oxidoreductase subunit K.